Here is a 901-residue protein sequence, read N- to C-terminus: Mediator of RNA polymerase II transcription subunit 14 (901 aa).

It belongs to the Mediator complex subunit 14 family. Component of the Mediator complex.

The protein localises to the nucleus. Component of the Mediator complex, a coactivator involved in the regulated transcription of nearly all RNA polymerase II-dependent genes. Mediator functions as a bridge to convey information from gene-specific regulatory proteins to the basal RNA polymerase II transcription machinery. Mediator is recruited to promoters by direct interactions with regulatory proteins and serves as a scaffold for the assembly of a functional preinitiation complex with RNA polymerase II and the general transcription factors. In Yarrowia lipolytica (strain CLIB 122 / E 150) (Yeast), this protein is Mediator of RNA polymerase II transcription subunit 14 (RGR1).